Consider the following 329-residue polypeptide: Probable endo-beta-1,4-glucanase B (329 aa).

The first 18 residues, 1-18, serve as a signal peptide directing secretion; the sequence is MKFGSIVLIAAAAGSAVA. N-linked (GlcNAc...) asparagine glycosylation is found at N33 and N96. E156 acts as the Proton donor in catalysis. E263 functions as the Nucleophile in the catalytic mechanism.

The protein belongs to the glycosyl hydrolase 5 (cellulase A) family.

The protein resides in the secreted. It carries out the reaction Endohydrolysis of (1-&gt;4)-beta-D-glucosidic linkages in cellulose, lichenin and cereal beta-D-glucans.. Has endoglucanase activity on substrates containing beta-1,4 glycosidic bonds, like in carboxymethylcellulose (CMC), hydroxyethylcellulose (HEC) and beta-glucan. Involved in the degradation of complex natural cellulosic substrates. The chain is Probable endo-beta-1,4-glucanase B (eglB) from Neosartorya fischeri (strain ATCC 1020 / DSM 3700 / CBS 544.65 / FGSC A1164 / JCM 1740 / NRRL 181 / WB 181) (Aspergillus fischerianus).